The chain runs to 113 residues: MQAKAVARTVRIAPRKARLVMDLIRGKQVGEAVSILNLTPKAASPIIEKVLKSAIANAEHNYELDANSLVITQAFVDEGPTLKRFRPRAMGRASAINKRTSHITIVVSEKKEG.

It belongs to the universal ribosomal protein uL22 family. Part of the 50S ribosomal subunit.

Its function is as follows. This protein binds specifically to 23S rRNA; its binding is stimulated by other ribosomal proteins, e.g. L4, L17, and L20. It is important during the early stages of 50S assembly. It makes multiple contacts with different domains of the 23S rRNA in the assembled 50S subunit and ribosome. The globular domain of the protein is located near the polypeptide exit tunnel on the outside of the subunit, while an extended beta-hairpin is found that lines the wall of the exit tunnel in the center of the 70S ribosome. In Bacillus pumilus (strain SAFR-032), this protein is Large ribosomal subunit protein uL22.